Here is a 304-residue protein sequence, read N- to C-terminus: Coenzyme PQQ synthesis protein B (304 aa).

Belongs to the PqqB family.

Its pathway is cofactor biosynthesis; pyrroloquinoline quinone biosynthesis. May be involved in the transport of PQQ or its precursor to the periplasm. The chain is Coenzyme PQQ synthesis protein B from Pseudomonas aeruginosa (strain ATCC 15692 / DSM 22644 / CIP 104116 / JCM 14847 / LMG 12228 / 1C / PRS 101 / PAO1).